We begin with the raw amino-acid sequence, 89 residues long: Defensin-like protein 108 (89 aa).

The signal sequence occupies residues 1 to 20 (MTSLIAFLFTVLVIVSSVHC). Intrachain disulfides connect cysteine 39/cysteine 81, cysteine 49/cysteine 71, cysteine 57/cysteine 79, and cysteine 61/cysteine 80.

This sequence belongs to the DEFL family.

The protein resides in the secreted. This is Defensin-like protein 108 (LCR51) from Arabidopsis thaliana (Mouse-ear cress).